A 597-amino-acid chain; its full sequence is Elongation factor 4 (597 aa).

One can recognise a tr-type G domain in the interval 2 to 184; that stretch reads KHIRNFSIIA…NIVTAIPPPE (183 aa). GTP contacts are provided by residues 14–19 and 131–134; these read DHGKST and NKID.

It belongs to the TRAFAC class translation factor GTPase superfamily. Classic translation factor GTPase family. LepA subfamily.

Its subcellular location is the cell inner membrane. The catalysed reaction is GTP + H2O = GDP + phosphate + H(+). Its function is as follows. Required for accurate and efficient protein synthesis under certain stress conditions. May act as a fidelity factor of the translation reaction, by catalyzing a one-codon backward translocation of tRNAs on improperly translocated ribosomes. Back-translocation proceeds from a post-translocation (POST) complex to a pre-translocation (PRE) complex, thus giving elongation factor G a second chance to translocate the tRNAs correctly. Binds to ribosomes in a GTP-dependent manner. This chain is Elongation factor 4, found in Vibrio atlanticus (strain LGP32) (Vibrio splendidus (strain Mel32)).